The sequence spans 904 residues: Envelope glycoprotein (904 aa).

At 1–726 (MDQDLDGAER…LFDWTSWKDW (726 aa)) the chain is on the extracellular side. Residues Asn-131, Asn-255, Asn-277, Asn-296, Asn-329, Asn-367, Asn-376, Asn-385, Asn-410, Asn-427, Asn-432, Asn-452, Asn-491, Asn-509, and Asn-541 are each glycosylated (N-linked (GlcNAc...) asparagine; by host). Residues 556 to 576 (AVGLAIFLLVLAIMAITSSLV) form a fusion peptide region. Positions 588–638 (AKVVERVVQNVSYIAQTQDQFTHLFRNINNRLNVLHHRVSYLEYVEEIRQK) form a coiled coil. The N-linked (GlcNAc...) asparagine; by host glycan is linked to Asn-597. The immunosuppression stretch occupies residues 615 to 631 (INNRLNVLHHRVSYLEY). N-linked (GlcNAc...) asparagine; by host glycosylation is found at Asn-663 and Asn-694. A coiled-coil region spans residues 676-712 (DEYDKIEEKILKIRVDWLNSSLSDTQDTFGLETSIFD). Residues 727-747 (IKIIIVIIVLWLLIKILLGML) form a helical membrane-spanning segment. The Cytoplasmic segment spans residues 748–904 (RSCAKVSQNY…AWYEGLRGSQ (157 aa)). Disordered stretches follow at residues 761–783 (PAEE…PASG) and 862–904 (GGTS…RGSQ). The segment covering 878-887 (WTGSREQNNP) has biased composition (polar residues).

As to quaternary structure, the mature envelope protein (Env) consists of a trimer of SU-TM heterodimers attached by non-covalent interactions or by a labile interchain disulfide bond. Specific enzymatic cleavages in vivo yield mature proteins. Envelope glycoproteins are synthesized as an inactive precursor that is N-glycosylated and processed likely by host cell furin or by a furin-like protease in the Golgi to yield the mature SU and TM proteins. The cleavage site between SU and TM requires the minimal sequence [KR]-X-[KR]-R.

The protein localises to the virion membrane. Its subcellular location is the host cell membrane. The surface protein (SU) attaches the virus to the host cell by binding to its receptor. This interaction triggers the refolding of the transmembrane protein (TM) and is thought to activate its fusogenic potential by unmasking its fusion peptide. Fusion occurs at the host cell plasma membrane. In terms of biological role, the transmembrane protein (TM) acts as a class I viral fusion protein. Under the current model, the protein has at least 3 conformational states: pre-fusion native state, pre-hairpin intermediate state, and post-fusion hairpin state. During viral and target cell membrane fusion, the coiled coil regions (heptad repeats) assume a trimer-of-hairpins structure, positioning the fusion peptide in close proximity to the C-terminal region of the ectodomain. The formation of this structure appears to drive apposition and subsequent fusion of viral and target cell membranes. Membranes fusion leads to delivery of the nucleocapsid into the cytoplasm. In Bovine immunodeficiency virus (strain R29) (BIV), this protein is Envelope glycoprotein (env).